Consider the following 760-residue polypeptide: 5-methyltetrahydropteroyltriglutamate--homocysteine methyltransferase (760 aa).

Residues Arg-17–Lys-20 and Lys-118 contribute to the 5-methyltetrahydropteroyltri-L-glutamate site. L-homocysteine is bound by residues Ile-436–Ser-438 and Glu-489. L-methionine contacts are provided by residues Ile-436–Ser-438 and Glu-489. Residues Arg-520–Cys-521 and Trp-566 each bind 5-methyltetrahydropteroyltri-L-glutamate. Asp-604 is a binding site for L-homocysteine. Asp-604 is an L-methionine binding site. A 5-methyltetrahydropteroyltri-L-glutamate-binding site is contributed by Glu-610. 3 residues coordinate Zn(2+): His-646, Cys-648, and Glu-670. Residue His-699 is the Proton donor of the active site. Zn(2+) is bound at residue Cys-731.

Belongs to the vitamin-B12 independent methionine synthase family. Zn(2+) serves as cofactor.

The enzyme catalyses 5-methyltetrahydropteroyltri-L-glutamate + L-homocysteine = tetrahydropteroyltri-L-glutamate + L-methionine. It functions in the pathway amino-acid biosynthesis; L-methionine biosynthesis via de novo pathway; L-methionine from L-homocysteine (MetE route): step 1/1. In terms of biological role, catalyzes the transfer of a methyl group from 5-methyltetrahydrofolate to homocysteine resulting in methionine formation. The protein is 5-methyltetrahydropteroyltriglutamate--homocysteine methyltransferase of Vibrio harveyi (Beneckea harveyi).